The following is a 434-amino-acid chain: MSILKIHAREIFDSRGNPTVEVDLYTNKGLFRAAVPSGASTGIYEALELRDNDKTRYLGKGVSKAVEHVNKTIAPALISKNVNVVEQEKIDKLMLEMDGTENKSKFGANAILGVSLAVCKAGAAEKGVPLYRHIADLAGNPEVILPVPAFNVINGGSHAGNKLAMQEFMILPVGADTFKEAMRIGAEVYHNLKNVIKEKYGKDATNVGDEGGFAPNILENKEALELLKTAIGKAGYSDKVVIGMDVAASEFYRDGKYDLDFKSPDDPSRYISPDQLADLYLGFVKNYPVVSIEDPFDQDDWAAWKKFTASVGIQVVGDDLTVTNPKRIAKAVEEKSCNCLLLKVNQIGSVTESLQACKLAQSNGWGVMVSHRSGETEDTFIADLVVGLCTGQIKTGAPCRSERLAKYNQLLRIEEELGSKARFAGRNFRNPRIN.

Position 40 (Ser40) interacts with Mg(2+). Residues His158 and Glu167 each coordinate substrate. Residue Glu210 is the Proton donor of the active site. 3 residues coordinate Mg(2+): Asp245, Glu293, and Asp318. Glu293 and Asp318 together coordinate substrate. Lys343 (proton acceptor) is an active-site residue. Residues 370 to 373 and Lys394 each bind substrate; that span reads SHRS.

It belongs to the enolase family. As to quaternary structure, homodimer. Mg(2+) is required as a cofactor.

The protein localises to the cytoplasm. The catalysed reaction is (2R)-2-phosphoglycerate = phosphoenolpyruvate + H2O. It participates in carbohydrate degradation; glycolysis; pyruvate from D-glyceraldehyde 3-phosphate: step 4/5. The protein is Alpha-enolase (ENO1) of Gallus gallus (Chicken).